A 135-amino-acid polypeptide reads, in one-letter code: Large ribosomal subunit protein uL16c (135 aa).

This sequence belongs to the universal ribosomal protein uL16 family. In terms of assembly, part of the 50S ribosomal subunit.

It is found in the plastid. It localises to the chloroplast. This Olimarabidopsis pumila (Dwarf rocket) protein is Large ribosomal subunit protein uL16c.